A 394-amino-acid polypeptide reads, in one-letter code: MAKEVFQRTKPHMNVGTIGHVDHGKTTLTAAISIYCSKLNKDAKALKYEDIDNAPEEKARGITINARHIEYETANRHYAHVDCPGHADYIKNMITGAAQMDAAILLVAADSGAEPQTKEHLLLAQRMGIKKIIVFLNKLDLADPELVELVEVEVLELVEKYGFSANTPIIKGSAFGAMSNPEDPEATKCVKELLESMDNYFDLPERDIDKPFLLAVEDVFSISGRGTVATGRIERGVIKVGQEVEIVGIKETRKTTVTGVEMFQKILEQGQAGDNVGLLLRGVDKKDIERGQVLSAPGTITPHKKFKASIYCLTKEEGGRHKPFFPGYRPQFFFRTTDVTGVVALEGKEMVMPGDNVDIVVELISSIAMDKNVEFAVREGGRTVASGRILEILE.

One can recognise a tr-type G domain in the interval 10 to 205 (KPHMNVGTIG…SMDNYFDLPE (196 aa)). The segment at 19–26 (GHVDHGKT) is G1. A GTP-binding site is contributed by 19–26 (GHVDHGKT). Thr26 is a Mg(2+) binding site. The G2 stretch occupies residues 61–65 (GITIN). Residues 82–85 (DCPG) form a G3 region. GTP-binding positions include 82–86 (DCPGH) and 137–140 (NKLD). Positions 137-140 (NKLD) are G4. A G5 region spans residues 173–175 (SAF).

The protein belongs to the TRAFAC class translation factor GTPase superfamily. Classic translation factor GTPase family. EF-Tu/EF-1A subfamily. Monomer.

It localises to the cytoplasm. It carries out the reaction GTP + H2O = GDP + phosphate + H(+). GTP hydrolase that promotes the GTP-dependent binding of aminoacyl-tRNA to the A-site of ribosomes during protein biosynthesis. This is Elongation factor Tu from Borreliella afzelii (strain PKo) (Borrelia afzelii).